The sequence spans 49 residues: Photosystem II reaction center protein K (49 aa).

Positions 1 to 12 (MISSIHLRKLLG) are excised as a propeptide. A helical membrane pass occupies residues 24-44 (IIDVLPIIPVLFLLLAFVWQA).

It belongs to the PsbK family. As to quaternary structure, PSII is composed of 1 copy each of membrane proteins PsbA, PsbB, PsbC, PsbD, PsbE, PsbF, PsbH, PsbI, PsbJ, PsbK, PsbL, PsbM, PsbT, PsbX, PsbY, PsbZ, Psb30/Ycf12, at least 3 peripheral proteins of the oxygen-evolving complex and a large number of cofactors. It forms dimeric complexes.

The protein localises to the plastid. It is found in the chloroplast thylakoid membrane. One of the components of the core complex of photosystem II (PSII). PSII is a light-driven water:plastoquinone oxidoreductase that uses light energy to abstract electrons from H(2)O, generating O(2) and a proton gradient subsequently used for ATP formation. It consists of a core antenna complex that captures photons, and an electron transfer chain that converts photonic excitation into a charge separation. This Phacus acuminatus protein is Photosystem II reaction center protein K.